The chain runs to 307 residues: Dioxygenase swnH1 (307 aa).

Fe cation-binding residues include histidine 149, aspartate 151, and histidine 227.

It belongs to the PhyH family. Homodimer. Fe cation is required as a cofactor.

The protein operates within mycotoxin biosynthesis. Functionally, dioxygenase; part of the gene cluster that mediates the biosynthesis of swainsonine (SW), a cytotoxic fungal alkaloid and a potential cancer therapy drug. Swainsonine production occurs via a multibranched pathway and is dispensable for fungal colonization of plants and infection of insect hosts. The first step of swainsonine biosynthesis is the production of the precursor pipecolic acid (PA) via conversion of L-lysine (Lys) to 1-piperideine-6-carboxylate (P6C) by the aminotransferase swnA, the latter being further reduced to PA by the reductase swnR. The PKS-NRPS hybrid synthetase swnK uptakes and condensates PA and malonyl-CoA with and without skipping of the ketoreductase (KR) domain in order to produce 3 intermediates, 1-oxoindolizidine, (1S)-1-hydroxyindolizin, and (1R)-1-hydroxyindolizine; with the transisomer (1S)-1-hydroxyindolizin being predominant. The terminal thioester reductase (TE) domain of swnK is involved in reduction of the thioester bond to release the intermediate aldehydes. The oxidoreductase swnN could contribute to the reduction of 1-oxoindolizidine to (1S)-1-hydroxyindolizin and (1R)-1-hydroxyindolizine, contributing to the major route of SW production. The dioxygenase swnH2 would be responsible for the oxidization of (1R)-1-hydroxyindolizine into (1R,2S)-1,2-dihydroxyindolizine and of (1S)-1-hydroxyindolizin to yield both (1R,2S)-1,2-dihydroxyindolizine and (1S,2S)-1,2-dihydroxyindolizine. The dioxygenase swnH1 then performs the conversion of the 1,2-dihydroxyindolizine epimers to SW. This Arthroderma benhamiae (strain ATCC MYA-4681 / CBS 112371) (Trichophyton mentagrophytes) protein is Dioxygenase swnH1.